Consider the following 609-residue polypeptide: Proline--tRNA ligase (609 aa).

This sequence belongs to the class-II aminoacyl-tRNA synthetase family. ProS type 1 subfamily. Homodimer.

It localises to the cytoplasm. It carries out the reaction tRNA(Pro) + L-proline + ATP = L-prolyl-tRNA(Pro) + AMP + diphosphate. Catalyzes the attachment of proline to tRNA(Pro) in a two-step reaction: proline is first activated by ATP to form Pro-AMP and then transferred to the acceptor end of tRNA(Pro). As ProRS can inadvertently accommodate and process non-cognate amino acids such as alanine and cysteine, to avoid such errors it has two additional distinct editing activities against alanine. One activity is designated as 'pretransfer' editing and involves the tRNA(Pro)-independent hydrolysis of activated Ala-AMP. The other activity is designated 'posttransfer' editing and involves deacylation of mischarged Ala-tRNA(Pro). The misacylated Cys-tRNA(Pro) is not edited by ProRS. This chain is Proline--tRNA ligase, found in Synechococcus sp. (strain JA-3-3Ab) (Cyanobacteria bacterium Yellowstone A-Prime).